The chain runs to 373 residues: Transaldolase (373 aa).

The active-site Schiff-base intermediate with substrate is the K143.

The protein belongs to the transaldolase family. Type 2 subfamily.

It localises to the cytoplasm. It carries out the reaction D-sedoheptulose 7-phosphate + D-glyceraldehyde 3-phosphate = D-erythrose 4-phosphate + beta-D-fructose 6-phosphate. It functions in the pathway carbohydrate degradation; pentose phosphate pathway; D-glyceraldehyde 3-phosphate and beta-D-fructose 6-phosphate from D-ribose 5-phosphate and D-xylulose 5-phosphate (non-oxidative stage): step 2/3. Transaldolase is important for the balance of metabolites in the pentose-phosphate pathway. The polypeptide is Transaldolase (Mycobacterium ulcerans (strain Agy99)).